A 561-amino-acid polypeptide reads, in one-letter code: DNA ligase B (561 aa).

Catalysis depends on Lys-125, which acts as the N6-AMP-lysine intermediate.

It belongs to the NAD-dependent DNA ligase family. LigB subfamily.

It carries out the reaction NAD(+) + (deoxyribonucleotide)n-3'-hydroxyl + 5'-phospho-(deoxyribonucleotide)m = (deoxyribonucleotide)n+m + AMP + beta-nicotinamide D-nucleotide.. In terms of biological role, catalyzes the formation of phosphodiester linkages between 5'-phosphoryl and 3'-hydroxyl groups in double-stranded DNA using NAD as a coenzyme and as the energy source for the reaction. This chain is DNA ligase B, found in Salmonella schwarzengrund (strain CVM19633).